Here is a 202-residue protein sequence, read N- to C-terminus: UMP-CMP kinase 3 (202 aa).

Residue 24-29 (GSGKGT) coordinates ATP. The tract at residues 44 to 73 (SAGDLLRAEIKSGSENGTMIQNMIKEGKIV) is NMP. A ribonucleoside 5'-phosphate contacts are provided by residues Arg50, 71–73 (KIV), and 98–101 (GFPR). Residue Asn105 participates in CMP binding. An LID region spans residues 136–144 (GRNQGREDD). Arg137 is a binding site for ATP. Residues Arg141 and Arg152 each coordinate a ribonucleoside 5'-phosphate. Lys180 is an ATP binding site.

As to quaternary structure, monomer. It depends on Mg(2+) as a cofactor.

The protein localises to the cytoplasm. It is found in the nucleus. The catalysed reaction is CMP + ATP = CDP + ADP. It catalyses the reaction dCMP + ATP = dCDP + ADP. The enzyme catalyses UMP + ATP = UDP + ADP. Functionally, catalyzes the phosphorylation of pyrimidine nucleoside monophosphates at the expense of ATP. Plays an important role in de novo pyrimidine nucleotide biosynthesis. Has preference for UMP and CMP as phosphate acceptors. Does not act on dCMP and dUMP. The chain is UMP-CMP kinase 3 (UMK3) from Arabidopsis thaliana (Mouse-ear cress).